The chain runs to 338 residues: Fructose-1,6-bisphosphatase class 1 (338 aa).

Glu94, Asp116, Leu118, and Asp119 together coordinate Mg(2+). Residues 119-122 (DGSS), Asn210, and Lys276 each bind substrate. Glu282 contributes to the Mg(2+) binding site.

It belongs to the FBPase class 1 family. As to quaternary structure, homotetramer. The cofactor is Mg(2+).

The protein localises to the cytoplasm. The catalysed reaction is beta-D-fructose 1,6-bisphosphate + H2O = beta-D-fructose 6-phosphate + phosphate. It functions in the pathway carbohydrate biosynthesis; gluconeogenesis. The polypeptide is Fructose-1,6-bisphosphatase class 1 (Paraburkholderia phytofirmans (strain DSM 17436 / LMG 22146 / PsJN) (Burkholderia phytofirmans)).